Here is a 214-residue protein sequence, read N- to C-terminus: GTP-binding nuclear protein GSP1/Ran (214 aa).

Residues 4–168 form the Small GTPase Ran-type domain; that stretch reads EVPTFKLVLV…LWLARKLAGN (165 aa). Residue 15–22 participates in GTP binding; that stretch reads DGGTGKTT. The switch-I stretch occupies residues 34–42; that stretch reads KKYIATIGV. GTP-binding positions include glycine 65, 119-122, and 147-149; these read NKVD and SAK. The segment at 65–81 is switch-II; it reads GQEKFGGLRDGYYINAQ.

It belongs to the small GTPase superfamily. Ran family. As to quaternary structure, found in a nuclear export complex with RanGTP, exportin and pre-miRNA.

The protein resides in the nucleus. GTP-binding protein involved in nucleocytoplasmic transport. Required for the import of protein into the nucleus and also for RNA export. Involved in chromatin condensation and control of cell cycle. The chain is GTP-binding nuclear protein GSP1/Ran (GSP1) from Eremothecium gossypii (strain ATCC 10895 / CBS 109.51 / FGSC 9923 / NRRL Y-1056) (Yeast).